We begin with the raw amino-acid sequence, 459 residues long: Eukaryotic translation initiation factor 3 subunit M (459 aa).

The region spanning 207–384 (LDWAQTHVVD…SEFLVHRATY (178 aa)) is the PCI domain. A disordered region spans residues 431 to 459 (AAAEGEKGDKNNKGPSERRRAPQEIAAAE). The segment covering 434–452 (EGEKGDKNNKGPSERRRAP) has biased composition (basic and acidic residues).

Belongs to the eIF-3 subunit M family. In terms of assembly, component of the eukaryotic translation initiation factor 3 (eIF-3) complex.

The protein localises to the cytoplasm. In terms of biological role, component of the eukaryotic translation initiation factor 3 (eIF-3) complex, which is involved in protein synthesis of a specialized repertoire of mRNAs and, together with other initiation factors, stimulates binding of mRNA and methionyl-tRNAi to the 40S ribosome. The eIF-3 complex specifically targets and initiates translation of a subset of mRNAs involved in cell proliferation. The polypeptide is Eukaryotic translation initiation factor 3 subunit M (Emericella nidulans (strain FGSC A4 / ATCC 38163 / CBS 112.46 / NRRL 194 / M139) (Aspergillus nidulans)).